A 261-amino-acid chain; its full sequence is MAAESGKIDPMHQFEVTPLGGGFNLGGQEVLFTNSALWMVVAAITLGLFMWGGMRRQLVPGRWQVAVEGFTGFISSMMMANIGTEGRKYTPYVFSLFMFILFCNLLGMLPLGVLGLHPFTVTSHIAITGVLALISFAIVLVVGFWRHGLHFFSLFVPHGTPLPMIPIIAPIEFVSFMVRPFSLGLRLFVAMTAGHVLLKVLSGFVINGFNAETLWLGSIVSVLSFTLMIGISALELLVAGIQAYVFALLTSLYINDAVNLH.

The next 8 membrane-spanning stretches (helical) occupy residues 30–50 (VLFT…GLFM), 63–83 (WQVA…ANIG), 96–116 (LFMF…VLGL), 125–145 (IAIT…VGFW), 151–171 (FFSL…IAPI), 187–207 (LFVA…FVIN), 214–234 (LWLG…ISAL), and 235–255 (ELLV…LYIN).

Belongs to the ATPase A chain family. In terms of assembly, F-type ATPases have 2 components, CF(1) - the catalytic core - and CF(0) - the membrane proton channel. CF(1) has five subunits: alpha(3), beta(3), gamma(1), delta(1), epsilon(1). CF(0) has three main subunits: a(1), b(2) and c(9-12). The alpha and beta chains form an alternating ring which encloses part of the gamma chain. CF(1) is attached to CF(0) by a central stalk formed by the gamma and epsilon chains, while a peripheral stalk is formed by the delta and b chains.

It localises to the cell inner membrane. Functionally, key component of the proton channel; it plays a direct role in the translocation of protons across the membrane. In Sphingopyxis alaskensis (strain DSM 13593 / LMG 18877 / RB2256) (Sphingomonas alaskensis), this protein is ATP synthase subunit a.